The following is a 109-amino-acid chain: Cell division protein ZapA (109 aa).

A coiled-coil region spans residues 22–99 (EQQDALNLAA…IEQALLEQGR (78 aa)).

The protein belongs to the ZapA family. Type 1 subfamily. Homodimer. Interacts with FtsZ.

It localises to the cytoplasm. In terms of biological role, activator of cell division through the inhibition of FtsZ GTPase activity, therefore promoting FtsZ assembly into bundles of protofilaments necessary for the formation of the division Z ring. It is recruited early at mid-cell but it is not essential for cell division. This Erwinia tasmaniensis (strain DSM 17950 / CFBP 7177 / CIP 109463 / NCPPB 4357 / Et1/99) protein is Cell division protein ZapA.